Here is a 191-residue protein sequence, read N- to C-terminus: A-type ATP synthase subunit E (191 aa).

The protein belongs to the V-ATPase E subunit family. Has multiple subunits with at least A(3), B(3), C, D, E, F, H, I and proteolipid K(x). The N-terminus is blocked.

The protein resides in the cell membrane. Functionally, component of the A-type ATP synthase that produces ATP from ADP in the presence of a proton gradient across the membrane. This is A-type ATP synthase subunit E from Sulfurisphaera tokodaii (strain DSM 16993 / JCM 10545 / NBRC 100140 / 7) (Sulfolobus tokodaii).